The following is a 146-amino-acid chain: VHLTAEEKSLVSGLWGKVNVDEVGGEALGRLLIVYPWTQRFFDSFGDLSTPDAVMSNAKVKAHGKKVLNSFSDGLKNLDNLKGTFAKLSELHCDKLHVDPENFKLLGNVLVCVLAHHFGKEFTPQVQAAYQKVVAGVANALAHKYH.

The residue at position 1 (valine 1) is an N-acetylvaline. A Globin domain is found at 2–146 (HLTAEEKSLV…VANALAHKYH (145 aa)). The residue at position 44 (serine 44) is a Phosphoserine. An N6-acetyllysine modification is found at lysine 59. Position 63 (histidine 63) interacts with heme b. Position 82 is an N6-acetyllysine (lysine 82). Histidine 92 contacts heme b. Cysteine 93 is subject to S-nitrosocysteine. An N6-acetyllysine modification is found at lysine 144.

Belongs to the globin family. Heterotetramer of two alpha chains and two beta chains. In terms of tissue distribution, red blood cells.

In terms of biological role, involved in oxygen transport from the lung to the various peripheral tissues. In Canis latrans (Coyote), this protein is Hemoglobin subunit beta (HBB).